The sequence spans 594 residues: UvrABC system protein C (594 aa).

Residues serine 13–isoleucine 99 form the GIY-YIG domain. Residues aspartate 205–isoleucine 240 form the UVR domain.

Belongs to the UvrC family. Interacts with UvrB in an incision complex.

It is found in the cytoplasm. In terms of biological role, the UvrABC repair system catalyzes the recognition and processing of DNA lesions. UvrC both incises the 5' and 3' sides of the lesion. The N-terminal half is responsible for the 3' incision and the C-terminal half is responsible for the 5' incision. The sequence is that of UvrABC system protein C from Helicobacter pylori (strain J99 / ATCC 700824) (Campylobacter pylori J99).